A 478-amino-acid chain; its full sequence is MTLSFVTRWRDELPETYTALSPTPLNNARLIWHNIELANTLSIPSSLFKNGAGVWGGEALLPGMSPLAQVYSGHQFGVWAGQLGDGRGILLGEQLLADGTTMDWHLKGAGLTPYSRMGDGRAVLRSTIRESLASEAMHYLGIPTTRALSIVTSDSPVYRETAEPGAMLMRVAPSHLRFGHFEHFYYRRESEKVRQLADFAIRHYWSHLEDDEDKYRLWFSDVVARTASLIAQWQTVGFAHGVMNTDNMSLLGLTLDYGPFGFLDDYEPGFICNHSDHQGRYSFDNQPAVALWNLQRLAQTLSPFVAVDALNEALDSYQQVLLTHYGQRMRQKLGFMTEQKEDNALLNELFSLMARERSDYTRTFRMLSLTEQHSAASPLRDEFIDRAAFDDWFARYRGRLQQDEVSDSERQQLIQSVNPALVLRNWLAQRAIEAAEKGDMMELHRLHEALRNPFSDRDDDYVSRPPDWGKRLEVSCSS.

Positions 84, 86, 87, 107, 119, 120, 170, and 177 each coordinate ATP. D246 (proton acceptor) is an active-site residue. Residues N247 and D256 each coordinate Mg(2+). Position 256 (D256) interacts with ATP.

Belongs to the SELO family. Mg(2+) is required as a cofactor. Mn(2+) serves as cofactor.

The catalysed reaction is L-seryl-[protein] + ATP = 3-O-(5'-adenylyl)-L-seryl-[protein] + diphosphate. It carries out the reaction L-threonyl-[protein] + ATP = 3-O-(5'-adenylyl)-L-threonyl-[protein] + diphosphate. The enzyme catalyses L-tyrosyl-[protein] + ATP = O-(5'-adenylyl)-L-tyrosyl-[protein] + diphosphate. It catalyses the reaction L-histidyl-[protein] + UTP = N(tele)-(5'-uridylyl)-L-histidyl-[protein] + diphosphate. The catalysed reaction is L-seryl-[protein] + UTP = O-(5'-uridylyl)-L-seryl-[protein] + diphosphate. It carries out the reaction L-tyrosyl-[protein] + UTP = O-(5'-uridylyl)-L-tyrosyl-[protein] + diphosphate. In terms of biological role, nucleotidyltransferase involved in the post-translational modification of proteins. It can catalyze the addition of adenosine monophosphate (AMP) or uridine monophosphate (UMP) to a protein, resulting in modifications known as AMPylation and UMPylation. The protein is Protein nucleotidyltransferase YdiU of Shigella boydii serotype 4 (strain Sb227).